The following is a 190-amino-acid chain: Acyl-acyl carrier protein thioesterase ATL3, chloroplastic (190 aa).

Residues 1–49 (MFLQVTGTATPAMPAVVFLNSWRRPLSIPLRSVKTFKPLAFFDLKGGKG) constitute a chloroplast transit peptide. Asp-66 is a catalytic residue.

Belongs to the 4-hydroxybenzoyl-CoA thioesterase family. Highly expressed in stems and flowers and at lower levels in rosette leaves, cauline leaves and siliques.

It localises to the plastid. Its subcellular location is the chloroplast. In terms of biological role, acyl-ACP thioesterase involved in the production of fatty acids and beta-keto fatty acids. Can produce fatty acids of long chain (14:1 and 16:1) and beta-keto fatty acids of medium to long chain (8:0, 10:0, 12:0, 12:1, 14:0 and 16:0) when expressed in a heterologous organism (E.coli). Possesses thioesterase activity for lauroyl-ACP (12:0-ACP) in vitro. May play a role in the generation of long fatty acids in the chloroplast. This Arabidopsis thaliana (Mouse-ear cress) protein is Acyl-acyl carrier protein thioesterase ATL3, chloroplastic.